The primary structure comprises 172 residues: Cytochrome b6-f complex iron-sulfur subunit (172 aa).

A helical membrane pass occupies residues 19 to 39 (LNALLSGSVGVVVVGALYPVV). The 101-residue stretch at 61-161 (GKPISVSELL…ATVDGDNVRF (101 aa)) folds into the Rieske domain. [2Fe-2S] cluster is bound by residues Cys-107, His-109, Cys-125, and His-128. Cys-112 and Cys-127 are disulfide-bonded.

This sequence belongs to the Rieske iron-sulfur protein family. As to quaternary structure, the 4 large subunits of the cytochrome b6-f complex are cytochrome b6, subunit IV (17 kDa polypeptide, PetD), cytochrome f and the Rieske protein, while the 4 small subunits are PetG, PetL, PetM and PetN. The complex functions as a dimer. Requires [2Fe-2S] cluster as cofactor.

It localises to the cellular thylakoid membrane. The enzyme catalyses 2 oxidized [plastocyanin] + a plastoquinol + 2 H(+)(in) = 2 reduced [plastocyanin] + a plastoquinone + 4 H(+)(out). Component of the cytochrome b6-f complex, which mediates electron transfer between photosystem II (PSII) and photosystem I (PSI), cyclic electron flow around PSI, and state transitions. In Synechococcus sp. (strain JA-2-3B'a(2-13)) (Cyanobacteria bacterium Yellowstone B-Prime), this protein is Cytochrome b6-f complex iron-sulfur subunit.